A 545-amino-acid polypeptide reads, in one-letter code: Acetyltransferase BOT5 (545 aa).

A signal peptide spans 1-19 (MATIPLFFSLILFLRLYHA). N-linked (GlcNAc...) asparagine glycosylation is found at Asn-70 and Asn-198. His-208 acts as the Proton acceptor in catalysis. N-linked (GlcNAc...) asparagine glycans are attached at residues Asn-346 and Asn-445. A disordered region spans residues 466-493 (GAGNQKSSSTRKAARHTEPTQAQTQPGR).

The protein belongs to the plant acyltransferase family.

The protein operates within secondary metabolite biosynthesis. Functionally, acetyltransferase; part of the gene cluster that mediates the biosynthesis of botrydial. Botrydial is necessary for colonization of plant tissue by the T4 strain. It is a strain-dependent virulence factor since highly aggressive strains like SAS56 or B05 still retain substantial virulence when botrydial synthesis is impaired, since they produce also botcinic acid. The first step of botrydial biosynthesis is performed by the sesquiterpene synthase BOT2 which catalyzes the cyclization of farnesyl diphosphate (FPP) to presilphiperfolan-8-beta-ol (PSP). The cytochrome P450 monooxygenase BOT4 then catalyzes the hydroxylation at C-4 to give a probotryane intermediate. Acetylation of the hydroxyl at C-4 is carried out by the acetyltransferase BOT5, followed by the combined action of the P450 monooxygenases BOT3 and BOT1, to yield finally the glycol, via the regio- and stereospecific hydroxylations at C-10 and C-15 of the probotryane intermediates, respectively. The cleavage of the C10-C15 bond of probotryane skeleton is an intriguing and chemically important reaction, which could be mediated by some of the monooxygenases or by a combination of them. It is possible that either BOT3 or BOT1 would oxidize either the 10- or the 15-hydroxy group to the hydroperoxide derivative, which would then undergo heterolytic fragmentation to give the dialdehyde botrydial. Finally, the dehydrogenase BOT7 might be involved in the conversion of botrydial to dihydrobotrydial. In Botryotinia fuckeliana (Noble rot fungus), this protein is Acetyltransferase BOT5.